Here is a 272-residue protein sequence, read N- to C-terminus: Sulfate transporter CysZ (272 aa).

4 helical membrane-spanning segments follow: residues 29-49 (FVIM…WLFI), 66-86 (WLSF…LLLF), 148-168 (IIAL…VPVL), and 219-239 (FVPV…TLMW).

The protein belongs to the CysZ family.

It localises to the cell inner membrane. High affinity, high specificity proton-dependent sulfate transporter, which mediates sulfate uptake. Provides the sulfur source for the cysteine synthesis pathway. This is Sulfate transporter CysZ from Haemophilus influenzae (strain PittGG).